A 240-amino-acid chain; its full sequence is Orotidine 5'-phosphate decarboxylase (240 aa).

Residues aspartate 15, lysine 37, 64–73, threonine 127, arginine 188, glutamine 197, glycine 217, and arginine 218 contribute to the substrate site; that span reads DLKYHDIPNT. Lysine 66 serves as the catalytic Proton donor.

This sequence belongs to the OMP decarboxylase family. Type 1 subfamily. As to quaternary structure, homodimer.

The catalysed reaction is orotidine 5'-phosphate + H(+) = UMP + CO2. Its pathway is pyrimidine metabolism; UMP biosynthesis via de novo pathway; UMP from orotate: step 2/2. In terms of biological role, catalyzes the decarboxylation of orotidine 5'-monophosphate (OMP) to uridine 5'-monophosphate (UMP). The polypeptide is Orotidine 5'-phosphate decarboxylase (Citrifermentans bemidjiense (strain ATCC BAA-1014 / DSM 16622 / JCM 12645 / Bem) (Geobacter bemidjiensis)).